The chain runs to 51 residues: Large ribosomal subunit protein bL33 (51 aa).

It belongs to the bacterial ribosomal protein bL33 family. Part of the 50S ribosomal subunit. Cross-links to the P and E site tRNAs.

The chain is Large ribosomal subunit protein bL33 from Pseudomonas aeruginosa (strain ATCC 15692 / DSM 22644 / CIP 104116 / JCM 14847 / LMG 12228 / 1C / PRS 101 / PAO1).